We begin with the raw amino-acid sequence, 149 residues long: Calmodulin (149 aa).

EF-hand domains follow at residues 8–43 (EQIA…LGQN), 44–79 (PTEA…KMKD), 81–116 (DSEE…LGEK), and 117–149 (LTDE…MMSK). The Ca(2+) site is built by Asp21, Asp23, Asp25, Thr27, Glu32, Asp57, Asp59, Asn61, Thr63, Glu68, Asp94, Asp96, Asn98, Glu105, Asp130, Asp132, Asp134, Gln136, and Glu141.

The protein belongs to the calmodulin family.

Calmodulin mediates the control of a large number of enzymes, ion channels and other proteins by Ca(2+). Among the enzymes to be stimulated by the calmodulin-Ca(2+) complex are a number of protein kinases and phosphatases. In Globisporangium splendens (Leaf rot fungus), this protein is Calmodulin.